A 497-amino-acid polypeptide reads, in one-letter code: GDP-fucose protein O-fucosyltransferase 4 (497 aa).

Topologically, residues 1–6 are cytoplasmic; sequence MACRRR. The chain crosses the membrane as a helical; Signal-anchor for type II membrane protein span at residues 7-27; it reads LLPCAGLGLFGVLCWVWVSFA. The Lumenal portion of the chain corresponds to 28–497; it reads SFPDDQLPLE…ITERRARGKH (470 aa). An N-linked (GlcNAc...) asparagine glycan is attached at N169. C392 and C395 are oxidised to a cystine. The disordered stretch occupies residues 406–427; sequence RAHRKDPERNPPPLPKMASNSH. The N-linked (GlcNAc...) asparagine glycan is linked to N474.

This sequence belongs to the glycosyltransferase 10 family.

The protein resides in the endoplasmic reticulum membrane. It carries out the reaction L-threonyl-[protein] + GDP-beta-L-fucose = 3-O-(alpha-L-fucosyl)-L-threonyl-[protein] + GDP + H(+). It catalyses the reaction L-seryl-[protein] + GDP-beta-L-fucose = 3-O-(alpha-L-fucosyl)-L-seryl-[protein] + GDP + H(+). It participates in protein modification; protein glycosylation. Protein O-fucosyltransferase that specifically catalyzes O-fucosylation of serine or threonine residues in EMI domains of target proteins. Attaches fucose through an O-glycosidic linkage. O-fucosylation of EMI domain-containing proteins may be required for facilitating protein folding and secretion. In Oryzias latipes (Japanese rice fish), this protein is GDP-fucose protein O-fucosyltransferase 4 (fut11).